The sequence spans 78 residues: Putative membrane protein insertion efficiency factor (78 aa).

The protein belongs to the UPF0161 family.

The protein localises to the cell membrane. Its function is as follows. Could be involved in insertion of integral membrane proteins into the membrane. The protein is Putative membrane protein insertion efficiency factor of Limosilactobacillus reuteri (strain DSM 20016) (Lactobacillus reuteri).